The chain runs to 311 residues: Porphobilinogen deaminase (311 aa).

Cysteine 242 carries the S-(dipyrrolylmethanemethyl)cysteine modification.

This sequence belongs to the HMBS family. In terms of assembly, monomer. Dipyrromethane is required as a cofactor.

It catalyses the reaction 4 porphobilinogen + H2O = hydroxymethylbilane + 4 NH4(+). Its pathway is porphyrin-containing compound metabolism; protoporphyrin-IX biosynthesis; coproporphyrinogen-III from 5-aminolevulinate: step 2/4. Functionally, tetrapolymerization of the monopyrrole PBG into the hydroxymethylbilane pre-uroporphyrinogen in several discrete steps. This is Porphobilinogen deaminase (hemC) from Neisseria meningitidis serogroup B (strain ATCC BAA-335 / MC58).